Here is a 251-residue protein sequence, read N- to C-terminus: GTP cyclohydrolase 1 type 2 homolog (251 aa).

A divalent metal cation is bound by residues His-64, His-65, Asp-102, His-219, and Glu-223.

Belongs to the GTP cyclohydrolase I type 2/NIF3 family. As to quaternary structure, homohexamer.

The polypeptide is GTP cyclohydrolase 1 type 2 homolog (Chlamydia muridarum (strain MoPn / Nigg)).